A 1106-amino-acid polypeptide reads, in one-letter code: Carbamoyl phosphate synthase large chain (1106 aa).

The tract at residues 1–402 is carboxyphosphate synthetic domain; the sequence is MPRRQDLNSV…ALQKAMRSLE (402 aa). 12 residues coordinate ATP: R129, R169, G175, G176, E208, I210, E215, G241, V242, H243, Q285, and E299. An ATP-grasp 1 domain is found at 133-328; that stretch reads KGVVERCGAE…IAKIATKLSL (196 aa). Residues Q285, E299, and N301 each contribute to the Mg(2+) site. Mn(2+) is bound by residues Q285, E299, and N301. Residues 403–550 are oligomerization domain; it reads QKGSAFSFAR…YHYSSYDRET (148 aa). Positions 551 to 953 are carbamoyl phosphate synthetic domain; it reads EVAPHEKPSV…AFAKAQAAAG (403 aa). One can recognise an ATP-grasp 2 domain in the interval 681–872; it reads ARVLTEAGLR…MAKAAALIGT (192 aa). The ATP site is built by R717, K756, L758, E763, G788, I789, H790, S791, Q831, and E843. Residues Q831, E843, and N845 each coordinate Mg(2+). Residues Q831, E843, and N845 each contribute to the Mn(2+) site. The region spanning 954 to 1106 is the MGS-like domain; the sequence is GPLPTSGSLF…ERAAQEASRD (153 aa). The interval 954-1106 is allosteric domain; that stretch reads GPLPTSGSLF…ERAAQEASRD (153 aa).

This sequence belongs to the CarB family. As to quaternary structure, composed of two chains; the small (or glutamine) chain promotes the hydrolysis of glutamine to ammonia, which is used by the large (or ammonia) chain to synthesize carbamoyl phosphate. Tetramer of heterodimers (alpha,beta)4. It depends on Mg(2+) as a cofactor. Mn(2+) is required as a cofactor.

The enzyme catalyses hydrogencarbonate + L-glutamine + 2 ATP + H2O = carbamoyl phosphate + L-glutamate + 2 ADP + phosphate + 2 H(+). It carries out the reaction hydrogencarbonate + NH4(+) + 2 ATP = carbamoyl phosphate + 2 ADP + phosphate + 2 H(+). The protein operates within amino-acid biosynthesis; L-arginine biosynthesis; carbamoyl phosphate from bicarbonate: step 1/1. It participates in pyrimidine metabolism; UMP biosynthesis via de novo pathway; (S)-dihydroorotate from bicarbonate: step 1/3. Functionally, large subunit of the glutamine-dependent carbamoyl phosphate synthetase (CPSase). CPSase catalyzes the formation of carbamoyl phosphate from the ammonia moiety of glutamine, carbonate, and phosphate donated by ATP, constituting the first step of 2 biosynthetic pathways, one leading to arginine and/or urea and the other to pyrimidine nucleotides. The large subunit (synthetase) binds the substrates ammonia (free or transferred from glutamine from the small subunit), hydrogencarbonate and ATP and carries out an ATP-coupled ligase reaction, activating hydrogencarbonate by forming carboxy phosphate which reacts with ammonia to form carbamoyl phosphate. This is Carbamoyl phosphate synthase large chain from Kocuria rhizophila (strain ATCC 9341 / DSM 348 / NBRC 103217 / DC2201).